The sequence spans 1072 residues: DNA-directed RNA polymerase subunit beta (1072 aa).

This sequence belongs to the RNA polymerase beta chain family. As to quaternary structure, in plastids the minimal PEP RNA polymerase catalytic core is composed of four subunits: alpha, beta, beta', and beta''. When a (nuclear-encoded) sigma factor is associated with the core the holoenzyme is formed, which can initiate transcription.

The protein resides in the plastid. It is found in the chloroplast. It catalyses the reaction RNA(n) + a ribonucleoside 5'-triphosphate = RNA(n+1) + diphosphate. Functionally, DNA-dependent RNA polymerase catalyzes the transcription of DNA into RNA using the four ribonucleoside triphosphates as substrates. The sequence is that of DNA-directed RNA polymerase subunit beta from Amborella trichopoda.